We begin with the raw amino-acid sequence, 207 residues long: Small ribosomal subunit protein uS4 (207 aa).

The segment at 31-55 is disordered; that stretch reads KCKLDSKPGQHGRTSGARTSDYGTQ. Residues 42–53 are compositionally biased toward polar residues; the sequence is GRTSGARTSDYG. An S4 RNA-binding domain is found at 97–160; that stretch reads SRLDNVVYRM…KKQARIVEAL (64 aa).

It belongs to the universal ribosomal protein uS4 family. Part of the 30S ribosomal subunit. Contacts protein S5. The interaction surface between S4 and S5 is involved in control of translational fidelity.

In terms of biological role, one of the primary rRNA binding proteins, it binds directly to 16S rRNA where it nucleates assembly of the body of the 30S subunit. Functionally, with S5 and S12 plays an important role in translational accuracy. In Burkholderia ambifaria (strain MC40-6), this protein is Small ribosomal subunit protein uS4.